Consider the following 147-residue polypeptide: Transcription antitermination protein NusB (147 aa).

The protein belongs to the NusB family.

Involved in transcription antitermination. Required for transcription of ribosomal RNA (rRNA) genes. Binds specifically to the boxA antiterminator sequence of the ribosomal RNA (rrn) operons. In Teredinibacter turnerae (strain ATCC 39867 / T7901), this protein is Transcription antitermination protein NusB.